The following is a 260-amino-acid chain: NH(3)-dependent NAD(+) synthetase (260 aa).

Gly31–Ser38 is a binding site for ATP. Asp37 lines the Mg(2+) pocket. Arg112 contributes to the deamido-NAD(+) binding site. Thr132 contacts ATP. Glu137 provides a ligand contact to Mg(2+). Lys161 and Ser183 together coordinate ATP.

Belongs to the NAD synthetase family. In terms of assembly, homodimer.

The catalysed reaction is deamido-NAD(+) + NH4(+) + ATP = AMP + diphosphate + NAD(+) + H(+). The protein operates within cofactor biosynthesis; NAD(+) biosynthesis; NAD(+) from deamido-NAD(+) (ammonia route): step 1/1. In terms of biological role, catalyzes the ATP-dependent amidation of deamido-NAD to form NAD. Uses ammonia as a nitrogen source. The sequence is that of NH(3)-dependent NAD(+) synthetase from Helicobacter acinonychis (strain Sheeba).